Reading from the N-terminus, the 635-residue chain is Protein OPG056 (635 aa).

This sequence belongs to the orthopoxvirus OPG056 family. Interacts with protein OPG164/A36. Interacts with protein OPG064/E2.

Its subcellular location is the virion membrane. The protein resides in the host endosome. Plays a role in intracellular enveloped virus (IEV) transport to the cell surface through microtubule transport. Together with protein OPG064/E2, forms a complex that interacts with host KLC2 (kinesin light chain isoform 2) to engage the kinesin-1 complex and thereby promote IEV trafficking. This is Protein OPG056 (OPG056) from Vaccinia virus (strain Western Reserve) (VACV).